We begin with the raw amino-acid sequence, 1262 residues long: ATP-dependent helicase/nuclease subunit A (1262 aa).

The UvrD-like helicase ATP-binding domain maps to 5 to 476 (FSFTPSQDQA…IVLAENFRSM (472 aa)). 26 to 33 (ASAGSGKT) contacts ATP. The region spanning 515 to 808 (DTVTSTAELL…SVMTIHGSKG (294 aa)) is the UvrD-like helicase C-terminal domain.

This sequence belongs to the helicase family. AddA subfamily. Heterodimer of AddA and AddB/RexB. Requires Mg(2+) as cofactor.

The catalysed reaction is Couples ATP hydrolysis with the unwinding of duplex DNA by translocating in the 3'-5' direction.. It carries out the reaction ATP + H2O = ADP + phosphate + H(+). The heterodimer acts as both an ATP-dependent DNA helicase and an ATP-dependent, dual-direction single-stranded exonuclease. Recognizes the chi site generating a DNA molecule suitable for the initiation of homologous recombination. The AddA nuclease domain is required for chi fragment generation; this subunit has the helicase and 3' -&gt; 5' nuclease activities. In Levilactobacillus brevis (strain ATCC 367 / BCRC 12310 / CIP 105137 / JCM 1170 / LMG 11437 / NCIMB 947 / NCTC 947) (Lactobacillus brevis), this protein is ATP-dependent helicase/nuclease subunit A.